The primary structure comprises 232 residues: Ribosomal RNA small subunit methyltransferase G (232 aa).

Residues Gly-93, Leu-98, 144–145, and Arg-163 contribute to the S-adenosyl-L-methionine site; that span reads VE.

Belongs to the methyltransferase superfamily. RNA methyltransferase RsmG family.

Its subcellular location is the cytoplasm. The catalysed reaction is guanosine(527) in 16S rRNA + S-adenosyl-L-methionine = N(7)-methylguanosine(527) in 16S rRNA + S-adenosyl-L-homocysteine. Functionally, specifically methylates the N7 position of guanine in position 527 of 16S rRNA. This chain is Ribosomal RNA small subunit methyltransferase G, found in Burkholderia pseudomallei (strain 1106a).